The sequence spans 189 residues: Protein GrpE (189 aa).

Over residues Met-1–Asp-10 the composition is skewed to polar residues. The tract at residues Met-1–Glu-21 is disordered.

This sequence belongs to the GrpE family. As to quaternary structure, homodimer.

Its subcellular location is the cytoplasm. Participates actively in the response to hyperosmotic and heat shock by preventing the aggregation of stress-denatured proteins, in association with DnaK and GrpE. It is the nucleotide exchange factor for DnaK and may function as a thermosensor. Unfolded proteins bind initially to DnaJ; upon interaction with the DnaJ-bound protein, DnaK hydrolyzes its bound ATP, resulting in the formation of a stable complex. GrpE releases ADP from DnaK; ATP binding to DnaK triggers the release of the substrate protein, thus completing the reaction cycle. Several rounds of ATP-dependent interactions between DnaJ, DnaK and GrpE are required for fully efficient folding. This Pseudomonas paraeruginosa (strain DSM 24068 / PA7) (Pseudomonas aeruginosa (strain PA7)) protein is Protein GrpE.